The sequence spans 497 residues: Apolipoprotein N-acyltransferase (497 aa).

A run of 6 helical transmembrane segments spans residues 21–41, 51–71, 85–105, 119–139, 157–177, and 189–209; these read FAPF…ALLW, ALTG…WLYV, VLAL…TGWI, GMVA…FTGF, FAPV…AAWL, and FWLG…IHWT. Residues 221–461 form the CN hydrolase domain; that stretch reads LQGNIPQNMK…GLHSTAQGFG (241 aa). E259 functions as the Proton acceptor in the catalytic mechanism. The active site involves K319. The Nucleophile role is filled by C371. A helical transmembrane segment spans residues 472–492; the sequence is SLVFALIGLLLLAGSLAAFSG.

The protein belongs to the CN hydrolase family. Apolipoprotein N-acyltransferase subfamily.

The protein resides in the cell inner membrane. The catalysed reaction is N-terminal S-1,2-diacyl-sn-glyceryl-L-cysteinyl-[lipoprotein] + a glycerophospholipid = N-acyl-S-1,2-diacyl-sn-glyceryl-L-cysteinyl-[lipoprotein] + a 2-acyl-sn-glycero-3-phospholipid + H(+). It functions in the pathway protein modification; lipoprotein biosynthesis (N-acyl transfer). Functionally, catalyzes the phospholipid dependent N-acylation of the N-terminal cysteine of apolipoprotein, the last step in lipoprotein maturation. The sequence is that of Apolipoprotein N-acyltransferase from Nitrosomonas europaea (strain ATCC 19718 / CIP 103999 / KCTC 2705 / NBRC 14298).